Reading from the N-terminus, the 880-residue chain is Alanine--tRNA ligase (880 aa).

Zn(2+) contacts are provided by H566, H570, C668, and H672.

Belongs to the class-II aminoacyl-tRNA synthetase family. Zn(2+) is required as a cofactor.

The protein localises to the cytoplasm. The catalysed reaction is tRNA(Ala) + L-alanine + ATP = L-alanyl-tRNA(Ala) + AMP + diphosphate. In terms of biological role, catalyzes the attachment of alanine to tRNA(Ala) in a two-step reaction: alanine is first activated by ATP to form Ala-AMP and then transferred to the acceptor end of tRNA(Ala). Also edits incorrectly charged Ser-tRNA(Ala) and Gly-tRNA(Ala) via its editing domain. This chain is Alanine--tRNA ligase, found in Trichormus variabilis (strain ATCC 29413 / PCC 7937) (Anabaena variabilis).